Reading from the N-terminus, the 249-residue chain is Metal-staphylopine import system ATP-binding protein CntF (249 aa).

The region spanning 2–244 is the ABC transporter domain; sequence IKVTDVEKSY…DNAYTRELIE (243 aa). 42–49 contributes to the ATP binding site; sequence GESGSGKS.

The protein belongs to the ABC transporter superfamily. In terms of assembly, the complex is composed of two ATP-binding proteins (CntD and CntF), two transmembrane proteins (CntB and CntC) and a solute-binding protein (CntA).

It is found in the cell membrane. Functionally, part of the ABC transporter complex CntABCDF (Opp1) involved in the uptake of metal in complex with the metallophore staphylopine (StP). May be involved in the import of a large array of divalent metals ions such as nickel, cobalt, zinc, copper and iron. Probably responsible for energy coupling to the transport system. The chain is Metal-staphylopine import system ATP-binding protein CntF from Staphylococcus aureus (strain Mu50 / ATCC 700699).